The chain runs to 234 residues: OVARIAN TUMOR DOMAIN-containing deubiquitinating enzyme 3 (234 aa).

The 159-residue stretch at 76 to 234 (YAVDRVKGDG…SGRNHYDLLR (159 aa)) folds into the OTU domain. A cys-loop region spans residues 81–87 (VKGDGRC). Residue Asp84 is part of the active site. Residue Cys87 is the Nucleophile of the active site. Positions 154–164 (IGRHDFWGGES) are variable-loop. A his-loop region spans residues 224–229 (YSGRNH). Residue His229 is part of the active site.

It belongs to the peptidase C85 family.

The catalysed reaction is Thiol-dependent hydrolysis of ester, thioester, amide, peptide and isopeptide bonds formed by the C-terminal Gly of ubiquitin (a 76-residue protein attached to proteins as an intracellular targeting signal).. Its function is as follows. Hydrolase that can remove conjugated ubiquitin from proteins in vitro and may therefore play an important regulatory role at the level of protein turnover by preventing degradation. Cysteine protease with a preference for 'Lys-63' over 'Lys-48' over 'Met-1' -linked ubiquitin (UB) tetramers (e.g. Ub3 and Ub4) as substrates. Also cleaves RUB-GST fusion. This chain is OVARIAN TUMOR DOMAIN-containing deubiquitinating enzyme 3, found in Arabidopsis thaliana (Mouse-ear cress).